The following is a 52-amino-acid chain: Large ribosomal subunit protein bL33 (52 aa).

This sequence belongs to the bacterial ribosomal protein bL33 family.

In Chlamydia pneumoniae (Chlamydophila pneumoniae), this protein is Large ribosomal subunit protein bL33 (rpmG).